A 340-amino-acid chain; its full sequence is UDP-3-O-(3-hydroxymyristoyl)glucosamine N-acyltransferase (340 aa).

Catalysis depends on His-239, which acts as the Proton acceptor.

The protein belongs to the transferase hexapeptide repeat family. LpxD subfamily. As to quaternary structure, homotrimer.

It carries out the reaction a UDP-3-O-[(3R)-3-hydroxyacyl]-alpha-D-glucosamine + a (3R)-hydroxyacyl-[ACP] = a UDP-2-N,3-O-bis[(3R)-3-hydroxyacyl]-alpha-D-glucosamine + holo-[ACP] + H(+). It catalyses the reaction UDP-3-O-[(3R)-3-hydroxytetradecanoyl]-alpha-D-glucosamine + (3R)-hydroxytetradecanoyl-[ACP] = UDP-2-N,3-O-bis[(3R)-3-hydroxytetradecanoyl]-alpha-D-glucosamine + holo-[ACP] + H(+). It functions in the pathway glycolipid biosynthesis; lipid IV(A) biosynthesis; lipid IV(A) from (3R)-3-hydroxytetradecanoyl-[acyl-carrier-protein] and UDP-N-acetyl-alpha-D-glucosamine: step 3/6. Its function is as follows. Catalyzes the N-acylation of UDP-3-O-(hydroxytetradecanoyl)glucosamine using 3-hydroxytetradecanoyl-ACP as the acyl donor. Is involved in the biosynthesis of lipid A, a phosphorylated glycolipid that anchors the lipopolysaccharide to the outer membrane of the cell. The chain is UDP-3-O-(3-hydroxymyristoyl)glucosamine N-acyltransferase from Pectobacterium atrosepticum (strain SCRI 1043 / ATCC BAA-672) (Erwinia carotovora subsp. atroseptica).